A 251-amino-acid chain; its full sequence is uncharacterized protein (251 aa).

The protein belongs to the chlamydial CPn_0206/CT_203/TC_0475 family.

This is an uncharacterized protein from Chlamydia trachomatis serovar D (strain ATCC VR-885 / DSM 19411 / UW-3/Cx).